The primary structure comprises 743 residues: MIPGSNPGGRIHNVVKMFQSYFMDAVNGYYRHLAIIESQDYLEKVNSLVEEYLEVNKKPRVIYGFHPWLDNSKDRMIEFRKKFENFLDIDYSNSEKYLGQSVDLVILDAIGDFRPNYIARFVDMTKGGGMAIIYSDDILRGKLYKESLTRDGVVKDLFERRFMELAKRYRGIIFLQGDRLTFTPYSSNETHKSHKKIPKSPKVPMQLHELCLSSDQNKVLEESLFITSPGKRVLVVTAARGRGKSASIGLFLSYLMTEEKFGNILVTSPTYYSSQEIFNFVIKGLDALNVKYKLTTSKDGKIMKITTGESRVKWVSPDLARNEEGDLIVVDEAAAIGMEFLDYILQGWDKTILVTTVHGYEGSGKAFLKYVNRLKSKVLLKHIKMDYPIRYAKGDPIEKFMFDVFLLDAEPAEVMYNGELKIEDVSQEELFQDNNLLKSVYGILVTAHYRNSPDDLMLLGDMAFQKIVVGYSSEKPIAVCQVVSEGDLTDRQIEDISNGLKNEGHLIPHRLIKYMRAFDFGKLKGWRIMRIAVSPENQGKGIGSRIIEEVIKMAKGVDWVGSSFVADYSVLRFWIKNGFTPVYLSSIKNEELNGYSVIVIRALSEKSKGFVVKLSSLLKDKLLRTSHQVYYNLNPQLIALLMRNTYSERRREGEVPDLYVNKIKAYIEGKVPYNVIAETAHFLITKHFLELKVNLSIEAEASLVARVLQGKSWYHAGLMLGLSSREVEERVKQGLEVLLRTYS.

ATP-binding positions include Gln216, 241–250, and Arg390; that span reads GRGKSASIGL. The region spanning 420–604 is the N-acetyltransferase domain; the sequence is LKIEDVSQEE…YSVIVIRALS (185 aa). Acetyl-CoA-binding positions include 531–533 and 538–544; these read IAV and QGKGIGS.

Belongs to the RNA cytidine acetyltransferase family. TmcA subfamily.

The protein resides in the cytoplasm. The catalysed reaction is cytidine(34) in elongator tRNA(Met) + acetyl-CoA + ATP + H2O = N(4)-acetylcytidine(34) in elongator tRNA(Met) + ADP + phosphate + CoA + H(+). Its function is as follows. Catalyzes the formation of N(4)-acetylcytidine (ac(4)C) at the wobble position of tRNA(Met), by using acetyl-CoA as an acetyl donor and ATP (or GTP). This is tRNA(Met) cytidine acetyltransferase TmcA from Saccharolobus islandicus (strain Y.G.57.14 / Yellowstone #1) (Sulfolobus islandicus).